The following is a 550-amino-acid chain: Hydroxylamine reductase (550 aa).

4 residues coordinate [2Fe-2S] cluster: Cys-3, Cys-6, Cys-18, and Cys-25. Residues His-249, Glu-273, Cys-317, Cys-405, Cys-433, Cys-458, Glu-492, and Lys-494 each coordinate hybrid [4Fe-2O-2S] cluster. Cys-405 is subject to Cysteine persulfide.

This sequence belongs to the HCP family. Requires [2Fe-2S] cluster as cofactor. Hybrid [4Fe-2O-2S] cluster is required as a cofactor.

The protein localises to the cytoplasm. It carries out the reaction A + NH4(+) + H2O = hydroxylamine + AH2 + H(+). In terms of biological role, catalyzes the reduction of hydroxylamine to form NH(3) and H(2)O. The polypeptide is Hydroxylamine reductase (Escherichia coli O7:K1 (strain IAI39 / ExPEC)).